Reading from the N-terminus, the 217-residue chain is Cytidylate kinase (217 aa).

Residue 10–18 (GPAGAGKST) participates in ATP binding.

This sequence belongs to the cytidylate kinase family. Type 1 subfamily.

Its subcellular location is the cytoplasm. The enzyme catalyses CMP + ATP = CDP + ADP. It carries out the reaction dCMP + ATP = dCDP + ADP. This chain is Cytidylate kinase, found in Clostridium botulinum (strain Loch Maree / Type A3).